A 292-amino-acid chain; its full sequence is Malectin (292 aa).

Positions 1–28 (MLGAWAVEGTAVALLRLLLLLLPPAIRG) are cleaved as a signal peptide. The Lumenal segment spans residues 29–269 (PGLGVAGVAG…TPNPYASDNS (241 aa)). Residues Y82, Y104, Y131, F132, and D201 each coordinate a carbohydrate. A disordered region spans residues 221–265 (LQPHPGLEKKEEEEEEEEYDEGSNLKKQTNKNRVQSGPRTPNPYA). Acidic residues predominate over residues 231–241 (EEEEEEEEYDE). Over residues 245–265 (LKKQTNKNRVQSGPRTPNPYA) the composition is skewed to polar residues. The N-linked (GlcNAc...) asparagine glycan is linked to N268. Residues 270–290 (SLMFPILVAFGVFIPTLFCLC) traverse the membrane as a helical segment. At 291–292 (RL) the chain is on the cytoplasmic side.

It belongs to the malectin family. As to quaternary structure, interacts with the oligosaccharyltransferase (OST) complex.

Its subcellular location is the endoplasmic reticulum membrane. Functionally, carbohydrate-binding protein with a strong ligand preference for Glc2-N-glycan. May play a role in the early steps of protein N-glycosylation. The sequence is that of Malectin from Homo sapiens (Human).